The following is a 304-amino-acid chain: Nod factor export ATP-binding protein I (304 aa).

The 231-residue stretch at I6–Y236 folds into the ABC transporter domain. G38–T45 is a binding site for ATP.

Belongs to the ABC transporter superfamily. Lipooligosaccharide exporter (TC 3.A.1.102) family. The complex is composed of two ATP-binding proteins (NodI) and two transmembrane proteins (NodJ).

It is found in the cell inner membrane. Its function is as follows. Part of the ABC transporter complex NodIJ involved in the export of the nodulation factors (Nod factors), the bacterial signal molecules that induce symbiosis and subsequent nodulation induction. Nod factors are LCO (lipo-chitin oligosaccharide), a modified beta-1,4-linked N-acetylglucosamine oligosaccharide. This subunit is responsible for energy coupling to the transport system. This is Nod factor export ATP-binding protein I from Burkholderia thailandensis (strain ATCC 700388 / DSM 13276 / CCUG 48851 / CIP 106301 / E264).